A 151-amino-acid chain; its full sequence is Ubiquitin-like protein 4A-B (151 aa).

Positions 1–76 constitute a Ubiquitin-like domain; that stretch reads MILTIKPLKG…LNLVVRPAGE (76 aa).

In terms of assembly, component of the BAT3 complex.

Its subcellular location is the cytoplasm. It is found in the cytosol. Functionally, component of the BAT3 complex, a multiprotein complex involved in the post-translational delivery of tail-anchored (TA) membrane proteins to the endoplasmic reticulum membrane. TA membrane proteins, also named type II transmembrane proteins, contain a single C-terminal transmembrane region. The protein is Ubiquitin-like protein 4A-B (ubl4ab) of Oncorhynchus mykiss (Rainbow trout).